The sequence spans 309 residues: ATP synthase gamma chain (309 aa).

The protein belongs to the ATPase gamma chain family. In terms of assembly, F-type ATPases have 2 components, CF(1) - the catalytic core - and CF(0) - the membrane proton channel. CF(1) has five subunits: alpha(3), beta(3), gamma(1), delta(1), epsilon(1). CF(0) has three main subunits: a, b and c.

The protein localises to the cell membrane. In terms of biological role, produces ATP from ADP in the presence of a proton gradient across the membrane. The gamma chain is believed to be important in regulating ATPase activity and the flow of protons through the CF(0) complex. This is ATP synthase gamma chain from Salinispora arenicola (strain CNS-205).